The following is a 436-amino-acid chain: Enolase 1 (436 aa).

Position 40 (S40) interacts with Mg(2+). The cysteines at positions 147 and 169 are disulfide-linked. (2R)-2-phosphoglycerate contacts are provided by Q164 and E208. The active-site Proton donor is E208. Mg(2+)-binding residues include D243, E296, and D322. D322 contacts (2R)-2-phosphoglycerate. K347 functions as the Proton acceptor in the catalytic mechanism. (2R)-2-phosphoglycerate is bound by residues R376 and S377.

Belongs to the enolase family. In terms of assembly, homodimer. Homotetramer. Interacts with methyltransferase METH; the interaction inhibits METH catalytic activity; 2-phosphoglycerate binding to ENO prevents the interaction with METH. Requires Mg(2+) as cofactor.

It is found in the cytoplasm. Its subcellular location is the nucleus. It carries out the reaction (2R)-2-phosphoglycerate = phosphoenolpyruvate + H2O. The protein operates within carbohydrate degradation; glycolysis; pyruvate from D-glyceraldehyde 3-phosphate: step 4/5. In terms of biological role, glycolytic enzyme that catalyzes the conversion of 2-phosphoglycerate to phosphoenolpyruvate. Inhibits tRNA methyltransferase METH catalytic activity in the absence of 2-phosphoglycerate. This is Enolase 1 from Entamoeba histolytica (strain ATCC 30459 / HM-1:IMSS / ABRM).